We begin with the raw amino-acid sequence, 340 residues long: NADH-quinone oxidoreductase subunit H (340 aa).

A run of 8 helical transmembrane segments spans residues 4–24 (TIGI…PLLL), 78–98 (YLFV…WAVI), 113–133 (VLYL…AGWA), 151–171 (VSYE…AGSM), 184–204 (MLHW…IAGI), 244–264 (SMIL…LSPF), 273–293 (IFFV…FLFV), and 316–336 (VLIP…VAHV).

It belongs to the complex I subunit 1 family. NDH-1 is composed of 14 different subunits. Subunits NuoA, H, J, K, L, M, N constitute the membrane sector of the complex.

Its subcellular location is the cell inner membrane. The enzyme catalyses a quinone + NADH + 5 H(+)(in) = a quinol + NAD(+) + 4 H(+)(out). Functionally, NDH-1 shuttles electrons from NADH, via FMN and iron-sulfur (Fe-S) centers, to quinones in the respiratory chain. The immediate electron acceptor for the enzyme in this species is believed to be ubiquinone. Couples the redox reaction to proton translocation (for every two electrons transferred, four hydrogen ions are translocated across the cytoplasmic membrane), and thus conserves the redox energy in a proton gradient. This subunit may bind ubiquinone. This chain is NADH-quinone oxidoreductase subunit H, found in Legionella pneumophila (strain Paris).